Consider the following 124-residue polypeptide: Small ribosomal subunit protein bS6 (124 aa).

Positions 96 to 124 are disordered; it reads ETGPSPMMKEVQREEAKKAAAAQPAEAQA. A compositionally biased stretch (low complexity) spans 114–124; sequence AAAAQPAEAQA.

Belongs to the bacterial ribosomal protein bS6 family.

Binds together with bS18 to 16S ribosomal RNA. This chain is Small ribosomal subunit protein bS6, found in Burkholderia orbicola (strain MC0-3).